The following is a 286-amino-acid chain: ATP synthase gamma chain (286 aa).

Belongs to the ATPase gamma chain family. In terms of assembly, F-type ATPases have 2 components, CF(1) - the catalytic core - and CF(0) - the membrane proton channel. CF(1) has five subunits: alpha(3), beta(3), gamma(1), delta(1), epsilon(1). CF(0) has three main subunits: a, b and c.

The protein localises to the cell inner membrane. Its function is as follows. Produces ATP from ADP in the presence of a proton gradient across the membrane. The gamma chain is believed to be important in regulating ATPase activity and the flow of protons through the CF(0) complex. This Alcanivorax borkumensis (strain ATCC 700651 / DSM 11573 / NCIMB 13689 / SK2) protein is ATP synthase gamma chain.